The chain runs to 566 residues: Protein OBERON 1 (566 aa).

A compositionally biased stretch (polar residues) spans 1–10 (MGTSSGSNLP). Positions 1–79 (MGTSSGSNLP…KTGPDSHDQH (79 aa)) are disordered. Residues 18–29 (QQLQTSLSLVSS) show a composition bias toward low complexity. Residues 47–60 (ESASSQETWPTSKS) are compositionally biased toward polar residues. Positions 64–79 (RKTDSGKTGPDSHDQH) are enriched in basic and acidic residues. The PHD-type zinc-finger motif lies at 225–289 (LCMCVICNKF…LFKCRACNHT (65 aa)). A coiled-coil region spans residues 407-522 (EEKTRMYKKA…LFEKIKEQES (116 aa)). Positions 545–566 (YNASSPRVDPRSNQRNPFRSNP) are disordered. The segment covering 555–566 (RSNQRNPFRSNP) has biased composition (polar residues).

Self-interacts. Interacts with OBE2, OBE3 and OBE4. Binds to VPg of pea seed borne mosaic virus (PSbMV), turnip mosaic virus (TuMV) and lettuce mosaic virus (LMV), but not with VPg of tobacco etch virus (TEV), cowpea mosaic virus (CPMV), tomato black ring virus (TBRV) and grapevine fan leaf virus (GFLV). Interacts with RBL. Expressed in roots, seedlings, stems, leaves, flowers and siliques, especially in the vasculature.

The protein localises to the nucleus. Its subcellular location is the nucleoplasm. Probable transcription factor that acts together with OBE2 for the maintenance and/or establishment of both the shoot and root meristems, probably by controlling the expression of the meristem genes such as WUS, PLT1 and PLT2 and of genes required for auxin responses. Promotes cell meristematic activity via the WUSCHEL-CLAVATA pathway. Involved in the development of the basal pole and in auxin-mediated root and vascular development in the embryo. Confers sensitivity to turnip mosaic virus (TuMV) probably by promoting viral movement and multiplication via interaction with TuMV VPg. The protein is Protein OBERON 1 of Arabidopsis thaliana (Mouse-ear cress).